Reading from the N-terminus, the 199-residue chain is Stress response protein SCP2 (199 aa).

The protein belongs to the CAPAB/TerDEXZ family.

It localises to the cytoplasm. The sequence is that of Stress response protein SCP2 (yceC) from Bacillus subtilis (strain 168).